We begin with the raw amino-acid sequence, 304 residues long: Agmatinase (304 aa).

Histidine 126, aspartate 149, histidine 151, aspartate 153, aspartate 230, and aspartate 232 together coordinate Mn(2+).

Belongs to the arginase family. Agmatinase subfamily. Mn(2+) is required as a cofactor.

It carries out the reaction agmatine + H2O = urea + putrescine. It participates in amine and polyamine biosynthesis; putrescine biosynthesis via agmatine pathway; putrescine from agmatine: step 1/1. Its function is as follows. Catalyzes the formation of putrescine from agmatine. In Edwardsiella ictaluri (strain 93-146), this protein is Agmatinase.